The primary structure comprises 441 residues: Membrane protein PB1A10.07c (441 aa).

The next 11 helical transmembrane spans lie at 1 to 21 (MGAV…VVGI), 41 to 61 (VGAV…SWCM), 97 to 117 (LSFT…LCNT), 128 to 148 (GLWP…FFIP), 158 to 178 (IISV…LVDF), 206 to 226 (TVGM…FFCA), 235 to 255 (INTI…HPTI), 263 to 283 (GLAQ…SALA), 307 to 327 (VIGA…AASS), 364 to 384 (YNFI…ASLL), and 415 to 435 (IITS…PVFF).

This sequence belongs to the TDE1 family.

The protein resides in the membrane. This is Membrane protein PB1A10.07c from Schizosaccharomyces pombe (strain 972 / ATCC 24843) (Fission yeast).